The sequence spans 207 residues: Guanylate kinase (207 aa).

The 180-residue stretch at 6–185 (GLLIVLSGPS…AKNRIQCIVE (180 aa)) folds into the Guanylate kinase-like domain. 13 to 20 (GPSGVGKG) contacts ATP.

Belongs to the guanylate kinase family.

The protein localises to the cytoplasm. It catalyses the reaction GMP + ATP = GDP + ADP. Essential for recycling GMP and indirectly, cGMP. This is Guanylate kinase from Staphylococcus aureus (strain Mu50 / ATCC 700699).